Reading from the N-terminus, the 647-residue chain is tRNA uridine 5-carboxymethylaminomethyl modification enzyme MnmG (647 aa).

Residues 22-27 (GAGHAG), Val-134, and Ser-189 contribute to the FAD site. Position 283 to 297 (283 to 297 (GARYCPSIEDKIMRF)) interacts with NAD(+). Gln-380 serves as a coordination point for FAD.

This sequence belongs to the MnmG family. In terms of assembly, homodimer. Heterotetramer of two MnmE and two MnmG subunits. The cofactor is FAD.

It is found in the cytoplasm. NAD-binding protein involved in the addition of a carboxymethylaminomethyl (cmnm) group at the wobble position (U34) of certain tRNAs, forming tRNA-cmnm(5)s(2)U34. The protein is tRNA uridine 5-carboxymethylaminomethyl modification enzyme MnmG of Desulfotalea psychrophila (strain LSv54 / DSM 12343).